The following is an 824-amino-acid chain: MASYPGPGKSKAKYPFKKRASLQASAAAPEARSGLGASPLQSARSLPGTAPCLKHFPLDLRTSMDGKCKEIAEELFSRSLAESELRSAPYEFPEESPIEQLEERRQRLERQISQDVKLEPDILLRAKQDFLKTDSDSDLQLYKEQGEGQGDRGLWERDVVLEREFQRVIISGEEKCGVPFTDLLDAAKSVVRALFIREKYMALSLQSFCPTTRRYLQQLAEKPLETRTYEQSPDTPVSADAPVHPPALEQHPYEHCEPSTMPGDLGLGLRMVRGVVHVYTRRDPDEHCPEVELPYPDLQEFVADVNVLMALIINGPIKSFCYRRLQYLSSKFQMHVLLNEMKELAAQKKVPHRDFYNIRKVDTHIHASSCMNQKHLLRFIKRAMKRHLEEIVHVEQGREQTLREVFESMNLTAYDLSVDTLDVHADRNTFHRFDKFNAKYNPIGESVLREIFIKTDNKISGKYFAHIIKEVMSDLEESKYQNAELRLSIYGRSRDEWDKLARWAVNHRVHSPNVRWLVQVPRLFDVYRTKGQLANFQEMLENIFLPLFEATVHPASHPELHLFLEHVDGFDSVDDESKPENHVFNLESPLPEAWVEEDNPPYAYYLYYTFANMAMLNHLRRQRGFHTFVLRPHCGEAGPIHHLVSAFMLAENISHGLLLRKAPVLQYLYYLAQIGIAMSPLSNNSLFLSYHRNPLPEYLSRGLMVSLSTDDPLQFHFTKEPLMEEYSIATQVWKLSSCDMCELARNSVLMSGFSHKVKSHWLGPNYTKEGPEGNDIRRTNVPDIRVGYRYETLCQELALITQAVQSEMLETIPEEVGIVMSPGP.

A disordered region spans residues 1-43 (MASYPGPGKSKAKYPFKKRASLQASAAAPEARSGLGASPLQSA). Positions 10–20 (SKAKYPFKKRA) are enriched in basic residues. At Ser-21 the chain carries Phosphoserine. Over residues 21–33 (SLQASAAAPEARS) the composition is skewed to low complexity. At Arg-44 the chain carries Omega-N-methylarginine. Phosphoserine occurs at positions 45, 63, and 79. At Tyr-90 the chain carries Phosphotyrosine. 2 positions are modified to phosphoserine: Ser-96 and Ser-113. Phosphothreonine is present on Thr-133. Phosphoserine occurs at positions 135 and 137. Zn(2+)-binding residues include His-364 and His-366. Substrate is bound by residues His-366 and 435–440 (KFNAKY). His-633 is a binding site for Zn(2+). Glu-636 lines the substrate pocket. Residue His-655 is the Proton acceptor of the active site. Zn(2+) is bound at residue Asp-710. 711–714 (DPLQ) serves as a coordination point for substrate.

This sequence belongs to the metallo-dependent hydrolases superfamily. Adenosine and AMP deaminases family. As to quaternary structure, homotetramer. Requires Zn(2+) as cofactor.

It carries out the reaction AMP + H2O + H(+) = IMP + NH4(+). Its pathway is purine metabolism; IMP biosynthesis via salvage pathway; IMP from AMP: step 1/1. Functionally, AMP deaminase plays a critical role in energy metabolism. Catalyzes the deamination of AMP to IMP and plays an important role in the purine nucleotide cycle. The sequence is that of AMP deaminase 2 from Rattus norvegicus (Rat).